A 112-amino-acid polypeptide reads, in one-letter code: Nitrogen regulatory protein P-II (112 aa).

At tyrosine 51 the chain carries O-UMP-tyrosine.

Belongs to the P(II) protein family. As to quaternary structure, homotrimer. In terms of processing, uridylylated/deuridylylated by GlnD.

In terms of biological role, P-II indirectly controls the transcription of the glutamine synthetase gene (GlnA). P-II prevents NR-II-catalyzed conversion of NR-I to NR-I-phosphate, the transcriptional activator of GlnA. When P-II is uridylylated to P-II-UMP, these events are reversed. When the ratio of Gln to 2-ketoglutarate decreases, P-II is uridylylated to P-II-UMP, which causes the deadenylation of glutamine synthetase by GlnE, so activating the enzyme. The sequence is that of Nitrogen regulatory protein P-II (glnB) from Pasteurella multocida (strain Pm70).